The following is a 386-amino-acid chain: Cell growth-regulating nucleolar protein (386 aa).

C2HC LYAR-type zinc fingers lie at residues M1–R26 and C28–I52. Zn(2+) contacts are provided by C6 and C9. A Glycyl lysine isopeptide (Lys-Gly) (interchain with G-Cter in SUMO2) cross-link involves residue K14. H21, C25, C33, C36, H48, and C51 together coordinate Zn(2+). Composition is skewed to polar residues over residues A141–P150 and V164–E174. Residues A141–F316 are disordered. Positions T172–K214 form a coiled coil. Composition is skewed to basic and acidic residues over residues T177–Q191, K198–K211, and P240–Q249. K202 participates in a covalent cross-link: Glycyl lysine isopeptide (Lys-Gly) (interchain with G-Cter in SUMO2).

In terms of assembly, interacts with PRMT5; this interaction is direct. Interacts with GNL2 and RPL23A. Interacts with nucleolin/NCL; this interaction is direct. Interacts with phosphorylated IRF3; this interaction impairs IRF3 DNA-binding activity. Expressed in testis (at protein level).

It localises to the nucleus. The protein resides in the nucleolus. Its subcellular location is the cytoplasm. It is found in the cell projection. The protein localises to the cilium. It localises to the photoreceptor outer segment. Its function is as follows. Plays a role in the maintenance of the appropriate processing of 47S/45S pre-rRNA to 32S/30S pre-rRNAs and their subsequent processing to produce 18S and 28S rRNAs. Also acts at the level of transcription regulation. Along with PRMT5, binds embryonic globin promoter. Represses the expression of embryonic globin Hbb-y gene. In neuroblastoma cells, may also repress the expression of oxidative stress genes, including CHAC1, HMOX1, SLC7A11, ULBP1 and that encoding the small nucleolar RNA SNORD41. Preferentially binds to a DNA motif containing 5'-GGTTAT-3'. Negatively regulates the antiviral innate immune response by targeting IRF3 and impairing its DNA-binding activity. In addition, inhibits NF-kappa-B-mediated expression of pro-inflammatory cytokines. Stimulates phagocytosis of photoreceptor outer segments by retinal pigment epithelial cells. Prevents NCL self-cleavage, maintaining a normal steady-state level of NCL protein in undifferentiated embryonic stem cells (ESCs), which in turn is essential for ESC self-renewal. The protein is Cell growth-regulating nucleolar protein (Lyar) of Rattus norvegicus (Rat).